The chain runs to 643 residues: DNA gyrase subunit B (643 aa).

The region spanning 428–542 is the Toprim domain; it reads SEIFLVEGDS…AGYVYIAQPP (115 aa). Mg(2+) contacts are provided by glutamate 434, aspartate 507, and aspartate 509.

Belongs to the type II topoisomerase GyrB family. Heterotetramer, composed of two GyrA and two GyrB chains. In the heterotetramer, GyrA contains the active site tyrosine that forms a transient covalent intermediate with DNA, while GyrB binds cofactors and catalyzes ATP hydrolysis. The cofactor is Mg(2+). It depends on Mn(2+) as a cofactor. Ca(2+) is required as a cofactor.

It localises to the cytoplasm. The enzyme catalyses ATP-dependent breakage, passage and rejoining of double-stranded DNA.. Functionally, a type II topoisomerase that negatively supercoils closed circular double-stranded (ds) DNA in an ATP-dependent manner to modulate DNA topology and maintain chromosomes in an underwound state. Negative supercoiling favors strand separation, and DNA replication, transcription, recombination and repair, all of which involve strand separation. Also able to catalyze the interconversion of other topological isomers of dsDNA rings, including catenanes and knotted rings. Type II topoisomerases break and join 2 DNA strands simultaneously in an ATP-dependent manner. The chain is DNA gyrase subunit B from Staphylococcus epidermidis (strain ATCC 35984 / DSM 28319 / BCRC 17069 / CCUG 31568 / BM 3577 / RP62A).